We begin with the raw amino-acid sequence, 349 residues long: Fe(3+) ions import ATP-binding protein FbpC (349 aa).

In terms of domain architecture, ABC transporter spans 4–236 (LELHHIGKSY…PVDEPTATFL (233 aa)). 36–43 (GPSGSGKT) lines the ATP pocket.

Belongs to the ABC transporter superfamily. Fe(3+) ion importer (TC 3.A.1.10) family. The complex is composed of two ATP-binding proteins (FbpC), two transmembrane proteins (FbpB) and a solute-binding protein (FbpA).

It is found in the cell inner membrane. It catalyses the reaction Fe(3+)(out) + ATP + H2O = Fe(3+)(in) + ADP + phosphate + H(+). Functionally, part of the ABC transporter complex FbpABC involved in Fe(3+) ions import. Responsible for energy coupling to the transport system. This chain is Fe(3+) ions import ATP-binding protein FbpC, found in Yersinia pestis bv. Antiqua (strain Antiqua).